The following is a 112-amino-acid chain: Nucleoid-associated protein CA_C0126 (112 aa).

Basic and acidic residues predominate over residues 93–102 (EEETSGEMKK). Positions 93–112 (EEETSGEMKKLTGGLNIPGL) are disordered.

Belongs to the YbaB/EbfC family. In terms of assembly, homodimer.

Its subcellular location is the cytoplasm. The protein localises to the nucleoid. Its function is as follows. Binds to DNA and alters its conformation. May be involved in regulation of gene expression, nucleoid organization and DNA protection. The protein is Nucleoid-associated protein CA_C0126 of Clostridium acetobutylicum (strain ATCC 824 / DSM 792 / JCM 1419 / IAM 19013 / LMG 5710 / NBRC 13948 / NRRL B-527 / VKM B-1787 / 2291 / W).